The primary structure comprises 156 residues: Small ribosomal subunit protein uS7 (156 aa).

It belongs to the universal ribosomal protein uS7 family. In terms of assembly, part of the 30S ribosomal subunit. Contacts proteins S9 and S11.

Functionally, one of the primary rRNA binding proteins, it binds directly to 16S rRNA where it nucleates assembly of the head domain of the 30S subunit. Is located at the subunit interface close to the decoding center, probably blocks exit of the E-site tRNA. The chain is Small ribosomal subunit protein uS7 from Shewanella piezotolerans (strain WP3 / JCM 13877).